Consider the following 647-residue polypeptide: 2',3'-cyclic-nucleotide 2'-phosphodiesterase/3'-nucleotidase (647 aa).

Positions 1–19 (MIKFSATLLATLIAASVNA) are cleaved as a signal peptide. Asp-31, His-33, Asp-76, Asn-116, His-225, His-257, and His-259 together coordinate a divalent metal cation. Residues Tyr-440 and 544 to 550 (YRAYGGK) each bind substrate.

The protein belongs to the 5'-nucleotidase family. The cofactor is a divalent metal cation.

The protein resides in the periplasm. The enzyme catalyses a nucleoside 2',3'-cyclic phosphate + H2O = a nucleoside 3'-phosphate + H(+). The catalysed reaction is a ribonucleoside 3'-phosphate + H2O = a ribonucleoside + phosphate. Its function is as follows. This bifunctional enzyme catalyzes two consecutive reactions during ribonucleic acid degradation. Converts a 2',3'-cyclic nucleotide to a 3'-nucleotide and then the 3'-nucleotide to the corresponding nucleoside and phosphate. This is 2',3'-cyclic-nucleotide 2'-phosphodiesterase/3'-nucleotidase (cpdB) from Salmonella typhimurium (strain LT2 / SGSC1412 / ATCC 700720).